Consider the following 342-residue polypeptide: Polygalacturonase inhibitor 2 (342 aa).

The signal sequence occupies residues 1–29; it reads MTQFNIPVTMSSSLSIILVILVSLSTAHS. 2 disulfides stabilise this stretch: Cys-32–Cys-62 and Cys-63–Cys-72. The N-linked (GlcNAc...) (complex) asparagine glycan is linked to Asn-64. 10 LRR repeats span residues 82–107, 108–132, 133–156, 157–180, 181–205, 206–228, 229–252, 253–275, 276–299, and 300–319; these read NNLD…LPYL, NFLY…LTQL, HYLY…IKTL, VTLD…LPNL, VGIT…SKLF, TSMT…NLNL, AFVD…DKNT, QKIH…SKNL, NGLD…LKFL, and HSLN…GGNL. A glycan (N-linked (GlcNAc...) (complex) asparagine) is linked at Asn-141. Residue Asn-303 is glycosylated (N-linked (GlcNAc...) asparagine). Disulfide bonds link Cys-310–Cys-332 and Cys-334–Cys-341.

Belongs to the polygalacturonase-inhibiting protein family. Asn-303 is not glycosylated.

The protein localises to the secreted. It is found in the cell wall. It localises to the membrane. In terms of biological role, inhibitor of fungal polygalacturonase. It is an important factor for plant resistance to phytopathogenic fungi. Inhibits all polygalacturonases (PG) tested, with the exception of PG from F.oxysporum which was only inhibited at 60%. This Phaseolus vulgaris (Kidney bean) protein is Polygalacturonase inhibitor 2 (PGIP2).